The chain runs to 284 residues: 4-diphosphocytidyl-2-C-methyl-D-erythritol kinase (284 aa).

Lys14 is an active-site residue. 98–108 (PMGGGLGGGSS) provides a ligand contact to ATP. The active site involves Asp140.

Belongs to the GHMP kinase family. IspE subfamily.

It catalyses the reaction 4-CDP-2-C-methyl-D-erythritol + ATP = 4-CDP-2-C-methyl-D-erythritol 2-phosphate + ADP + H(+). It participates in isoprenoid biosynthesis; isopentenyl diphosphate biosynthesis via DXP pathway; isopentenyl diphosphate from 1-deoxy-D-xylulose 5-phosphate: step 3/6. Its function is as follows. Catalyzes the phosphorylation of the position 2 hydroxy group of 4-diphosphocytidyl-2C-methyl-D-erythritol. The polypeptide is 4-diphosphocytidyl-2-C-methyl-D-erythritol kinase (Shewanella pealeana (strain ATCC 700345 / ANG-SQ1)).